Here is a 231-residue protein sequence, read N- to C-terminus: Probable transaldolase (231 aa).

The Schiff-base intermediate with substrate role is filled by K83.

This sequence belongs to the transaldolase family. Type 3B subfamily.

It is found in the cytoplasm. It catalyses the reaction D-sedoheptulose 7-phosphate + D-glyceraldehyde 3-phosphate = D-erythrose 4-phosphate + beta-D-fructose 6-phosphate. Its pathway is carbohydrate degradation; pentose phosphate pathway; D-glyceraldehyde 3-phosphate and beta-D-fructose 6-phosphate from D-ribose 5-phosphate and D-xylulose 5-phosphate (non-oxidative stage): step 2/3. In terms of biological role, transaldolase is important for the balance of metabolites in the pentose-phosphate pathway. This Rhodospirillum centenum (strain ATCC 51521 / SW) protein is Probable transaldolase.